Consider the following 433-residue polypeptide: Serine hydroxymethyltransferase (433 aa).

(6S)-5,6,7,8-tetrahydrofolate-binding positions include Leu-131 and 135–137 (GHL). At Lys-240 the chain carries N6-(pyridoxal phosphate)lysine.

This sequence belongs to the SHMT family. Homodimer. The cofactor is pyridoxal 5'-phosphate.

It localises to the cytoplasm. The enzyme catalyses (6R)-5,10-methylene-5,6,7,8-tetrahydrofolate + glycine + H2O = (6S)-5,6,7,8-tetrahydrofolate + L-serine. It functions in the pathway one-carbon metabolism; tetrahydrofolate interconversion. Its pathway is amino-acid biosynthesis; glycine biosynthesis; glycine from L-serine: step 1/1. In terms of biological role, catalyzes the reversible interconversion of serine and glycine with tetrahydrofolate (THF) serving as the one-carbon carrier. This reaction serves as the major source of one-carbon groups required for the biosynthesis of purines, thymidylate, methionine, and other important biomolecules. Also exhibits THF-independent aldolase activity toward beta-hydroxyamino acids, producing glycine and aldehydes, via a retro-aldol mechanism. This is Serine hydroxymethyltransferase from Bifidobacterium adolescentis (strain ATCC 15703 / DSM 20083 / NCTC 11814 / E194a).